The following is a 464-amino-acid chain: Uronate isomerase (464 aa).

It belongs to the metallo-dependent hydrolases superfamily. Uronate isomerase family.

It carries out the reaction D-glucuronate = D-fructuronate. The catalysed reaction is aldehydo-D-galacturonate = keto-D-tagaturonate. It functions in the pathway carbohydrate metabolism; pentose and glucuronate interconversion. This Caldicellulosiruptor saccharolyticus (strain ATCC 43494 / DSM 8903 / Tp8T 6331) protein is Uronate isomerase.